A 37-amino-acid chain; its full sequence is U1-theraphotoxin-Hs1b (37 aa).

Disulfide bonds link Cys4-Cys18, Cys8-Cys29, and Cys23-Cys34.

In terms of assembly, form 1 and form 2 may dimerize. As to expression, expressed by the venom gland.

It localises to the secreted. Lethal neurotoxin that blocks neuromuscular transmission. Acts cooperatively to potentiate the activity of huwentoxin-I. The polypeptide is U1-theraphotoxin-Hs1b (Cyriopagopus schmidti (Chinese bird spider)).